The chain runs to 394 residues: Elongation factor Tu (394 aa).

Residues 10-204 (KLHINVGTIG…VLDSYIPEPK (195 aa)) enclose the tr-type G domain. The G1 stretch occupies residues 19–26 (GHVDHGKT). 19-26 (GHVDHGKT) provides a ligand contact to GTP. Mg(2+) is bound at residue Thr26. The G2 stretch occupies residues 60–64 (GITIN). A G3 region spans residues 81 to 84 (DCPG). GTP-binding positions include 81–85 (DCPGH) and 136–139 (NKCD). Positions 136 to 139 (NKCD) are G4. The interval 174 to 176 (SAL) is G5.

This sequence belongs to the TRAFAC class translation factor GTPase superfamily. Classic translation factor GTPase family. EF-Tu/EF-1A subfamily. In terms of assembly, monomer.

The protein localises to the cytoplasm. It carries out the reaction GTP + H2O = GDP + phosphate + H(+). Functionally, GTP hydrolase that promotes the GTP-dependent binding of aminoacyl-tRNA to the A-site of ribosomes during protein biosynthesis. This chain is Elongation factor Tu, found in Baumannia cicadellinicola subsp. Homalodisca coagulata.